The following is a 131-amino-acid chain: Phosphoribosyl-AMP cyclohydrolase (131 aa).

Asp82 serves as a coordination point for Mg(2+). Residue Cys83 coordinates Zn(2+). Mg(2+) contacts are provided by Asp84 and Asp86. Positions 99 and 106 each coordinate Zn(2+).

Belongs to the PRA-CH family. As to quaternary structure, homodimer. The cofactor is Mg(2+). Requires Zn(2+) as cofactor.

The protein localises to the cytoplasm. The enzyme catalyses 1-(5-phospho-beta-D-ribosyl)-5'-AMP + H2O = 1-(5-phospho-beta-D-ribosyl)-5-[(5-phospho-beta-D-ribosylamino)methylideneamino]imidazole-4-carboxamide. The protein operates within amino-acid biosynthesis; L-histidine biosynthesis; L-histidine from 5-phospho-alpha-D-ribose 1-diphosphate: step 3/9. Catalyzes the hydrolysis of the adenine ring of phosphoribosyl-AMP. The chain is Phosphoribosyl-AMP cyclohydrolase from Methanospirillum hungatei JF-1 (strain ATCC 27890 / DSM 864 / NBRC 100397 / JF-1).